The following is a 1711-amino-acid chain: Reverse gyrase (1711 aa).

Residues 1-39 (MKAVYREMCPNCWGRISDERLVMRNPCEECLDEPVHADS) form an RG N-terminal-type zinc finger. Positions 9, 12, 27, and 30 each coordinate Zn(2+). Residues Q89 and 106 to 113 (APTGMGKS) contribute to the ATP site. Residues 93–256 (VKRLLKGRSF…RLKKQMSRYL (164 aa)) enclose the Helicase ATP-binding domain. The short motif at 213–216 (DDVD) is the DEAD box element. Residues 638–1711 (DLVRSALMIV…YSEIQRYVSG (1074 aa)) form a topoisomerase I region. The Toprim domain occupies 642 to 805 (SALMIVESPN…NIKRIEFHEV (164 aa)). Residue E648 participates in Mg(2+) binding. The segment at 722–751 (LKRCRDCGHQFVDWEKKGVCPRCGSTNVRD) adopts an RG C-terminal-type zinc-finger fold. Zn(2+) is bound by residues C725, C728, C741, and C744. D774 provides a ligand contact to Mg(2+). Residues 821–1709 (NENRVNAQIV…ELYSEIQRYV (889 aa)) form the Topo IA-type catalytic domain. A DOD-type homing endonuclease domain is found at 1160-1287 (VFGLVLGDGT…LSVYLYQIGI (128 aa)). The O-(5'-phospho-DNA)-tyrosine intermediate role is filled by Y1452.

This sequence in the N-terminal section; belongs to the DEAD box helicase family. DDVD subfamily. In the C-terminal section; belongs to the type IA topoisomerase family. As to quaternary structure, monomer. The cofactor is Zn(2+). It depends on Mg(2+) as a cofactor. In terms of processing, this protein undergoes a protein self splicing that involves a post-translational excision of the intervening region (intein) followed by peptide ligation.

The protein localises to the cytoplasm. The catalysed reaction is ATP + H2O = ADP + phosphate + H(+). In terms of biological role, modifies the topological state of DNA by introducing positive supercoils in an ATP-dependent process, increasing the linking number in steps of +1. Binds to single-stranded DNA, transiently cleaves and then rejoins the ends, introducing a positive supercoil in the process. The scissile phosphodiester is attacked by the catalytic tyrosine of the enzyme, resulting in the formation of a DNA-(5'-phosphotyrosyl)-enzyme intermediate. Probably involved in rewinding DNA strands in regions of the chromosome that have opened up to allow replication, transcription, DNA repair and/or for DNA protection. In Thermococcus kodakarensis (strain ATCC BAA-918 / JCM 12380 / KOD1) (Pyrococcus kodakaraensis (strain KOD1)), this protein is Reverse gyrase.